The sequence spans 268 residues: tRNA pseudouridine synthase A (268 aa).

D52 functions as the Nucleophile in the catalytic mechanism. Y110 is a binding site for substrate.

This sequence belongs to the tRNA pseudouridine synthase TruA family. As to quaternary structure, homodimer.

It carries out the reaction uridine(38/39/40) in tRNA = pseudouridine(38/39/40) in tRNA. In terms of biological role, formation of pseudouridine at positions 38, 39 and 40 in the anticodon stem and loop of transfer RNAs. In Prochlorococcus marinus (strain MIT 9515), this protein is tRNA pseudouridine synthase A.